The sequence spans 65 residues: Small, acid-soluble spore protein C3 (65 aa).

This sequence belongs to the alpha/beta-type SASP family.

In terms of biological role, SASP are bound to spore DNA. They are double-stranded DNA-binding proteins that cause DNA to change to an a-like conformation. They protect the DNA backbone from chemical and enzymatic cleavage and are thus involved in dormant spore's high resistance to UV light. This chain is Small, acid-soluble spore protein C3 (SASP-C3), found in Priestia megaterium (Bacillus megaterium).